A 203-amino-acid polypeptide reads, in one-letter code: MNNLKQGKFITFEGGEGIGKSTQSQMLYEYLQSQNTPVILTREVGGTIVAEKMREILVHEELLPMSELLQAMAARYDHMARKIIPALQEGHIVICDRFIDSTVCYQGLELENGIDLVYNLHKTLMPSLMPDITFFIDVEPDTAIKRVNSRNMNNKFDIRGIDFYKTIYYCFKELSNRFPERIKTIKASDLSPLEVHELIKKHL.

14 to 21 (GGEGIGKS) contributes to the ATP binding site.

It belongs to the thymidylate kinase family.

It catalyses the reaction dTMP + ATP = dTDP + ADP. Its function is as follows. Phosphorylation of dTMP to form dTDP in both de novo and salvage pathways of dTTP synthesis. This Rickettsia peacockii (strain Rustic) protein is Thymidylate kinase.